The chain runs to 579 residues: Folliculin (579 aa).

The tract at residues 32 to 82 (GAGSGDGAGRGEPADEEEGGIQMSSRIRAHSPAEGASAESSSPGPKKSDMC) is disordered. Phosphoserine is present on residues Ser-62 and Ser-73. Over residues 63-76 (PAEGASAESSSPGP) the composition is skewed to low complexity. The uDENN FLCN/SMCR8-type domain occupies 86 to 242 (RSLAAGHPGY…RNGNAARSLT (157 aa)). Residues 285 to 309 (QMEQLAELEEESESWDNSEAEEEEK) adopt a coiled-coil conformation. Acidic residues predominate over residues 294-308 (EESESWDNSEAEEEE). Residues 294–321 (EESESWDNSEAEEEEKGPALPEGAEGRE) are disordered. A phosphoserine mark is found at Ser-302, Ser-406, Ser-537, Ser-542, and Ser-571. In terms of domain architecture, cDENN FLCN/SMCR8-type spans 339 to 491 (QPRKLSVFKS…ILNKMEAALT (153 aa)). One can recognise a dDENN FLCN/SMCR8-type domain in the interval 493–558 (QNLSVDVVDQ…LLKFWMTGLS (66 aa)).

The protein belongs to the folliculin family. In terms of assembly, interacts (via C-terminus) with FNIP1 or FNIP2 (via C-terminus). Component of the lysosomal folliculin complex (LFC), composed of FLCN, FNIP1 (or FNIP2), RagA/RRAGA or RagB/RRAGB GDP-bound, RagC/RRAGC or RagD/RRAGD GTP-bound, and Ragulator. Interaction with FNIP1 or FNIP2 mediates indirect interaction with the PRKAA1, PRKAB1 and PRKAG1 subunits of 5'-AMP-activated protein kinase (AMPK). Interacts with HSP90AA1 in the presence of FNIP1. Interacts with HSP70, STUB1, CDC37, AHSA1, CCT2, STIP1, PTGES3 and PPP5C. Interacts with GABARAP; interaction takes place in the presence of FNIP1 and/or FNIP2. Interacts with RILP; the interaction is direct and promotes association between RILP and RAB34. Interacts with KIF3A and KIF3B. Interacts with lactate dehydrogenase LDHA, but not LDHB; the interaction is direct, may preferentially bind LDHA dimers rather than tetramers, and regulates LDHA activity, acting as an uncompetitive inhibitor. Phosphorylation by ULK1 modulates the interaction with GABARAP and is required to regulate autophagy.

Its subcellular location is the lysosome membrane. It localises to the cytoplasm. It is found in the cytosol. The protein localises to the cell projection. The protein resides in the cilium. Its subcellular location is the cytoskeleton. It localises to the microtubule organizing center. It is found in the centrosome. The protein localises to the spindle. The protein resides in the nucleus. Its activity is regulated as follows. GTPase-activating activity is inhibited in the folliculin complex (LFC), which stabilizes the GDP-bound state of RagA/RRAGA (or RagB/RRAGB), because Arg-164 is located far from the RagC/RRAGC or RagD/RRAGD nucleotide pocket. Disassembly of the LFC complex upon amino acid restimulation liberates the GTPase-activating activity. Its function is as follows. Multi-functional protein, involved in both the cellular response to amino acid availability and in the regulation of glycolysis. GTPase-activating protein that plays a key role in the cellular response to amino acid availability through regulation of the non-canonical mTORC1 signaling cascade controlling the MiT/TFE factors TFEB and TFE3. Activates mTORC1 by acting as a GTPase-activating protein: specifically stimulates GTP hydrolysis by RagC/RRAGC or RagD/RRAGD, promoting the conversion to the GDP-bound state of RagC/RRAGC or RagD/RRAGD, and thereby activating the kinase activity of mTORC1. The GTPase-activating activity is inhibited during starvation and activated in presence of nutrients. Acts as a key component for non-canonical mTORC1-dependent control of the MiT/TFE factors TFEB and TFE3, while it is not involved in mTORC1-dependent phosphorylation of canonical RPS6KB1/S6K1 and EIF4EBP1/4E-BP1. In low-amino acid conditions, the lysosomal folliculin complex (LFC) is formed on the membrane of lysosomes, which inhibits the GTPase-activating activity of FLCN, inactivates mTORC1 and maximizes nuclear translocation of TFEB and TFE3. Upon amino acid restimulation, RagA/RRAGA (or RagB/RRAGB) nucleotide exchange promotes disassembly of the LFC complex and liberates the GTPase-activating activity of FLCN, leading to activation of mTORC1 and subsequent cytoplasmic retention of TFEB and TFE3. Indirectly acts as a positive regulator of Wnt signaling by promoting mTOR-dependent cytoplasmic retention of MiT/TFE factor TFE3. Required for the exit of hematopoietic stem cell from pluripotency by promoting mTOR-dependent cytoplasmic retention of TFE3, thereby increasing Wnt signaling. Involved in the control of embryonic stem cells differentiation; together with LAMTOR1 it is necessary to recruit and activate RagC/RRAGC and RagD/RRAGD at the lysosomes, and to induce exit of embryonic stem cells from pluripotency via non-canonical, mTOR-independent TFE3 inactivation. Acts as an inhibitor of browning of adipose tissue by regulating mTOR-dependent cytoplasmic retention of TFE3. In response to flow stress, regulates STK11/LKB1 accumulation and mTORC1 activation through primary cilia: may act by recruiting STK11/LKB1 to primary cilia for activation of AMPK resided at basal bodies, causing mTORC1 down-regulation. Together with FNIP1 and/or FNIP2, regulates autophagy: following phosphorylation by ULK1, interacts with GABARAP and promotes autophagy. Required for starvation-induced perinuclear clustering of lysosomes by promoting association of RILP with its effector RAB34. Regulates glycolysis by binding to lactate dehydrogenase LDHA, acting as an uncompetitive inhibitor. The polypeptide is Folliculin (Bos taurus (Bovine)).